We begin with the raw amino-acid sequence, 123 residues long: Small ribosomal subunit protein eS25 (123 aa).

Over residues 1–13 (MPPKKDTKGDSKK) the composition is skewed to basic and acidic residues. Positions 1–34 (MPPKKDTKGDSKKGQKAKAGSGGGKAKKKKWSKG) are disordered. Residues 25–34 (KAKKKKWSKG) are compositionally biased toward basic residues.

Belongs to the eukaryotic ribosomal protein eS25 family.

The sequence is that of Small ribosomal subunit protein eS25 (RPS25) from Branchiostoma belcheri (Amphioxus).